The primary structure comprises 229 residues: Thiamine-phosphate synthase (229 aa).

4-amino-2-methyl-5-(diphosphooxymethyl)pyrimidine-binding positions include 38-42 (QFREK) and Asn73. Positions 74 and 93 each coordinate Mg(2+). Ser111 serves as a coordination point for 4-amino-2-methyl-5-(diphosphooxymethyl)pyrimidine. 137–139 (TLS) serves as a coordination point for 2-[(2R,5Z)-2-carboxy-4-methylthiazol-5(2H)-ylidene]ethyl phosphate. Residue Lys140 coordinates 4-amino-2-methyl-5-(diphosphooxymethyl)pyrimidine. 2-[(2R,5Z)-2-carboxy-4-methylthiazol-5(2H)-ylidene]ethyl phosphate contacts are provided by residues Gly169 and 189–190 (IS).

This sequence belongs to the thiamine-phosphate synthase family. Mg(2+) serves as cofactor.

The enzyme catalyses 2-[(2R,5Z)-2-carboxy-4-methylthiazol-5(2H)-ylidene]ethyl phosphate + 4-amino-2-methyl-5-(diphosphooxymethyl)pyrimidine + 2 H(+) = thiamine phosphate + CO2 + diphosphate. It catalyses the reaction 2-(2-carboxy-4-methylthiazol-5-yl)ethyl phosphate + 4-amino-2-methyl-5-(diphosphooxymethyl)pyrimidine + 2 H(+) = thiamine phosphate + CO2 + diphosphate. It carries out the reaction 4-methyl-5-(2-phosphooxyethyl)-thiazole + 4-amino-2-methyl-5-(diphosphooxymethyl)pyrimidine + H(+) = thiamine phosphate + diphosphate. It participates in cofactor biosynthesis; thiamine diphosphate biosynthesis; thiamine phosphate from 4-amino-2-methyl-5-diphosphomethylpyrimidine and 4-methyl-5-(2-phosphoethyl)-thiazole: step 1/1. Functionally, condenses 4-methyl-5-(beta-hydroxyethyl)thiazole monophosphate (THZ-P) and 2-methyl-4-amino-5-hydroxymethyl pyrimidine pyrophosphate (HMP-PP) to form thiamine monophosphate (TMP). The chain is Thiamine-phosphate synthase from Streptococcus suis (strain 98HAH33).